Consider the following 59-residue polypeptide: Photosystem II reaction center protein K (59 aa).

Positions 1–22 (MLNIFSLICLSSALHSSSFFFA) are excised as a propeptide. Residues 38-58 (MPVIPVLFFLLALVWQAAVSF) traverse the membrane as a helical segment.

Belongs to the PsbK family. PSII is composed of 1 copy each of membrane proteins PsbA, PsbB, PsbC, PsbD, PsbE, PsbF, PsbH, PsbI, PsbJ, PsbK, PsbL, PsbM, PsbT, PsbX, PsbY, PsbZ, Psb30/Ycf12, at least 3 peripheral proteins of the oxygen-evolving complex and a large number of cofactors. It forms dimeric complexes.

The protein resides in the plastid. Its subcellular location is the chloroplast thylakoid membrane. In terms of biological role, one of the components of the core complex of photosystem II (PSII). PSII is a light-driven water:plastoquinone oxidoreductase that uses light energy to abstract electrons from H(2)O, generating O(2) and a proton gradient subsequently used for ATP formation. It consists of a core antenna complex that captures photons, and an electron transfer chain that converts photonic excitation into a charge separation. This Piper cenocladum (Ant piper) protein is Photosystem II reaction center protein K.